The primary structure comprises 161 residues: 18.5 kDa class I heat shock protein (161 aa).

A sHSP domain is found at 47-161 (ENSAFVSTRV…PDVKAIEISG (115 aa)).

It belongs to the small heat shock protein (HSP20) family. As to quaternary structure, forms oligomeric structures.

It is found in the cytoplasm. The polypeptide is 18.5 kDa class I heat shock protein (HSP18.5-C) (Glycine max (Soybean)).